A 390-amino-acid polypeptide reads, in one-letter code: Guanidine hydrolase (390 aa).

Histidine 174, aspartate 199, histidine 201, aspartate 203, aspartate 291, and aspartate 293 together coordinate Ni(2+).

Belongs to the arginase family. As to quaternary structure, homohexamer. It depends on Ni(2+) as a cofactor.

It is found in the cytoplasm. The enzyme catalyses guanidine + H2O = urea + NH4(+). Its activity is regulated as follows. Activation of GdmH depends on the presence of the accessory proteins GhaA (Sll1078) and GhaB (Sll1079), which load nickel into the active site. Hydrolase activity is slightly activated in the presence of GTP. It does not require ATP or NAD(P)H. Addition of Ca(2+), Mn(2+), Fe(2+) or Fe(3+) has no consistent effects, whereas addition of Co(2+), Cu(2+) or Zn(2+) inhibits the activity. In terms of biological role, catalyzes the hydrolysis of guanidine into urea and ammonium. Is highly specific for free guanidine. At pH 8, also catalyzes the release of urea from methylguanidine but with significantly reduced specific activity compared with that for guanidine. Cannot hydrolyze guanidinoacetate, guanidinopropionate, guanidinobutyrate, agmatine, arginine or creatine. Required to use guanidine as the sole nitrogen source for growth. Overexpression of the gene accelerates guanidine degradation and promotes biomass growth. This is Guanidine hydrolase from Synechocystis sp. (strain ATCC 27184 / PCC 6803 / Kazusa).